Consider the following 240-residue polypeptide: MDEEVENKVILHGSFASPYSKRIELALRLKSIPYQFVQEDLQNKSQTLLRYNPVHKKIPVLVHNGKPISESLFIIEYIDETWSNGPHILPEDPYRRSKVRFWANYIQLHLYDLVIKVVKSEGEEQKKALTEVKEKLSVIEKEGLKEIFSDTDGEPTVTNETMSLVDIVMCTLLSPYKAHEEVLGLKIIDPEIVPGVYGWINAINETSVVKDLSPPYEQILEILRAFRQMSLSPVLETYQS.

One can recognise a GST N-terminal domain in the interval 7–86 (NKVILHGSFA…YIDETWSNGP (80 aa)). Residues 17–18 (SP), 43–44 (NK), 57–58 (KI), and 70–71 (ES) each bind glutathione. The GST C-terminal domain occupies 92–226 (DPYRRSKVRF…EQILEILRAF (135 aa)). At T161 the chain carries Phosphothreonine.

The protein belongs to the GST superfamily. Tau family.

The protein resides in the cytoplasm. It localises to the cytosol. It carries out the reaction RX + glutathione = an S-substituted glutathione + a halide anion + H(+). Its function is as follows. May be involved in the conjugation of reduced glutathione to a wide number of exogenous and endogenous hydrophobic electrophiles and have a detoxification role against certain herbicides. In Arabidopsis thaliana (Mouse-ear cress), this protein is Glutathione S-transferase U9 (GSTU9).